We begin with the raw amino-acid sequence, 471 residues long: Methyltransferase OMS1, mitochondrial (471 aa).

The transit peptide at 1 to 39 (MIVFRRFPTCLLHHIRQPASRSLLLESQRRSLSFTSYKY) directs the protein to the mitochondrion. At 40 to 103 (NSSHIDDDKS…AIARSEKFSK (64 aa)) the chain is on the mitochondrial matrix side. A helical transmembrane segment spans residues 104 to 123 (GMTKYMIGAYVIFLIYGLFF). The Mitochondrial intermembrane segment spans residues 124 to 471 (TKKLFAKDKE…LEPVPPVSKS (348 aa)). Residues 450–463 (FEKKDDMASKKELE) are compositionally biased toward basic and acidic residues. The disordered stretch occupies residues 450–471 (FEKKDDMASKKELEPVPPVSKS).

The protein belongs to the methyltransferase superfamily. METL family.

Its subcellular location is the mitochondrion inner membrane. Functionally, mitochondrial methyltransferase which suppresses respiratory defects caused by OXA1 mutations when overexpressed. This chain is Methyltransferase OMS1, mitochondrial (OMS1), found in Saccharomyces cerevisiae (strain ATCC 204508 / S288c) (Baker's yeast).